A 500-amino-acid polypeptide reads, in one-letter code: Low-density lipoprotein receptor-related protein 11 (500 aa).

Positions Met-1–Ala-37 are cleaved as a signal peptide. Residues Ala-38–Gly-450 lie on the Extracellular side of the membrane. Residues Ala-99–Tyr-184 form the MANSC domain. N-linked (GlcNAc...) asparagine glycosylation is found at Asn-164 and Asn-291. A PKD domain is found at Pro-210 to Gly-305. The LDL-receptor class A domain occupies Thr-309–Gln-345. 3 disulfides stabilise this stretch: Cys-310–Cys-322, Cys-317–Cys-335, and Cys-329–Cys-344. The segment at Ala-358–Pro-445 is disordered. An N-linked (GlcNAc...) asparagine glycan is attached at Asn-401. Residues Ala-451 to Leu-473 traverse the membrane as a helical segment. The Cytoplasmic portion of the chain corresponds to Arg-474–Leu-500. Residue Ser-491 is modified to Phosphoserine.

This sequence belongs to the LDLR family.

Its subcellular location is the membrane. The chain is Low-density lipoprotein receptor-related protein 11 (LRP11) from Homo sapiens (Human).